The chain runs to 159 residues: Ribosomal RNA large subunit methyltransferase H (159 aa).

S-adenosyl-L-methionine contacts are provided by residues L76, G108, and 127–132 (FSKMTF).

This sequence belongs to the RNA methyltransferase RlmH family. In terms of assembly, homodimer.

Its subcellular location is the cytoplasm. The enzyme catalyses pseudouridine(1915) in 23S rRNA + S-adenosyl-L-methionine = N(3)-methylpseudouridine(1915) in 23S rRNA + S-adenosyl-L-homocysteine + H(+). In terms of biological role, specifically methylates the pseudouridine at position 1915 (m3Psi1915) in 23S rRNA. In Bifidobacterium adolescentis (strain ATCC 15703 / DSM 20083 / NCTC 11814 / E194a), this protein is Ribosomal RNA large subunit methyltransferase H.